Here is a 259-residue protein sequence, read N- to C-terminus: Peroxisomal membrane protein 11B (259 aa).

The residue at position 43 (lysine 43) is an N6-acetyllysine. Residues 157 to 176 (LKGSGGGVPGGSETGGLGGP) form a disordered region. Over residues 159 to 176 (GSGGGVPGGSETGGLGGP) the composition is skewed to gly residues. The segment at 211 to 259 (VVRNACDLFIPLDKLGLWRCGPGIVGLCGLVSSILSILTLIYPWLRLKP) is interaction with PEX19, PEX11G and FIS1 and peroxisome targeting. The helical transmembrane segment at 233-255 (GIVGLCGLVSSILSILTLIYPWL) threads the bilayer.

This sequence belongs to the peroxin-11 family. In terms of assembly, homodimer. Heterodimer with PEX11G. Interacts with PEX19. Interacts with FIS1.

The protein resides in the peroxisome membrane. In terms of biological role, involved in peroxisomal proliferation. May regulate peroxisome division by recruiting the dynamin-related GTPase DNM1L to the peroxisomal membrane. Promotes membrane protrusion and elongation on the peroxisomal surface. The polypeptide is Peroxisomal membrane protein 11B (PEX11B) (Homo sapiens (Human)).